The chain runs to 116 residues: Protein Wnt-5a (116 aa).

A lipid anchor (O-palmitoleoyl serine; by PORCN) is attached at serine 1. Asparagine 69 and asparagine 83 each carry an N-linked (GlcNAc...) asparagine glycan. Cysteine 82 and cysteine 97 are joined by a disulfide.

This sequence belongs to the Wnt family. Palmitoleoylation is required for efficient binding to frizzled receptors. Depalmitoleoylation leads to Wnt signaling pathway inhibition.

The protein localises to the secreted. Its subcellular location is the extracellular space. The protein resides in the extracellular matrix. Ligand for members of the frizzled family of seven transmembrane receptors. Can activate or inhibit canonical Wnt signaling, depending on receptor context. Required during embryogenesis for extension of the primary anterior-posterior axis. In Plestiodon skiltonianus (Western skink), this protein is Protein Wnt-5a (WNT-5A).